A 419-amino-acid polypeptide reads, in one-letter code: Glutamyl-tRNA reductase (419 aa).

Substrate is bound by residues threonine 49–arginine 52, serine 107, glutamate 112–glutamine 114, and glutamine 118. Cysteine 50 (nucleophile) is an active-site residue. Residue glycine 187 to isoleucine 192 participates in NADP(+) binding.

The protein belongs to the glutamyl-tRNA reductase family. Homodimer.

The enzyme catalyses (S)-4-amino-5-oxopentanoate + tRNA(Glu) + NADP(+) = L-glutamyl-tRNA(Glu) + NADPH + H(+). It participates in porphyrin-containing compound metabolism; protoporphyrin-IX biosynthesis; 5-aminolevulinate from L-glutamyl-tRNA(Glu): step 1/2. Catalyzes the NADPH-dependent reduction of glutamyl-tRNA(Glu) to glutamate 1-semialdehyde (GSA). The sequence is that of Glutamyl-tRNA reductase from Vibrio vulnificus (strain CMCP6).